Here is a 136-residue protein sequence, read N- to C-terminus: Histone H3.1t (136 aa).

The interval 1 to 43 (MARTKQTARKSTGGKAPRKQLATKVARKSAPATGGVKKPHRYR) is disordered. Asymmetric dimethylarginine; by PRMT6; alternate is present on Arg3. Arg3 is subject to Citrulline; alternate. Thr4 bears the Phosphothreonine; by HASPIN mark. An Allysine; alternate modification is found at Lys5. Position 5 is an N6,N6,N6-trimethyllysine; alternate (Lys5). N6,N6-dimethyllysine; alternate is present on Lys5. At Lys5 the chain carries N6-(2-hydroxyisobutyryl)lysine; alternate. At Lys5 the chain carries N6-(beta-hydroxybutyryl)lysine; alternate. Residue Lys5 is modified to N6-acetyllysine; alternate. N6-methyllysine; alternate is present on Lys5. Gln6 carries the 5-glutamyl dopamine; alternate modification. Residue Gln6 is modified to 5-glutamyl serotonin; alternate. At Thr7 the chain carries Phosphothreonine; by PKC. Citrulline; alternate is present on Arg9. Arg9 carries the post-translational modification Symmetric dimethylarginine; by PRMT5; alternate. Residue Lys10 is modified to N6,N6,N6-trimethyllysine; alternate. Position 10 is an N6,N6-dimethyllysine; alternate (Lys10). Lys10 bears the N6-(2-hydroxyisobutyryl)lysine; alternate mark. An N6-(beta-hydroxybutyryl)lysine; alternate modification is found at Lys10. Lys10 carries the N6-acetyllysine; alternate modification. Lys10 carries the post-translational modification N6-methyllysine; alternate. At Lys10 the chain carries N6-lactoyllysine; alternate. Ser11 bears the ADP-ribosylserine; alternate mark. Ser11 is subject to Phosphoserine; alternate; by AURKB, AURKC, RPS6KA3, RPS6KA4 and RPS6KA5. Thr12 carries the post-translational modification Phosphothreonine; by PKC. Position 15 is an N6-(2-hydroxyisobutyryl)lysine; alternate (Lys15). N6-(beta-hydroxybutyryl)lysine; alternate is present on Lys15. The residue at position 15 (Lys15) is an N6-acetyllysine; alternate. The residue at position 15 (Lys15) is an N6-lactoyllysine; alternate. The residue at position 15 (Lys15) is an N6-glutaryllysine; alternate. Lys15 bears the N6-succinyllysine; alternate mark. Arg18 bears the Citrulline; alternate mark. An Asymmetric dimethylarginine; by CARM1; alternate modification is found at Arg18. Residues Lys19 and Lys24 each carry the N6-(2-hydroxyisobutyryl)lysine; alternate modification. Lys19 and Lys24 each carry N6-(beta-hydroxybutyryl)lysine; alternate. N6-acetyllysine; alternate occurs at positions 19 and 24. 2 positions are modified to N6-methyllysine; alternate: Lys19 and Lys24. N6-lactoyllysine; alternate occurs at positions 19 and 24. Residues Lys19 and Lys24 each carry the N6-glutaryllysine; alternate modification. N6-butyryllysine; alternate occurs at positions 19 and 24. Arg27 carries the post-translational modification Citrulline. Lys28 is modified (N6,N6,N6-trimethyllysine; alternate). Lys28 carries the N6,N6-dimethyllysine; alternate modification. N6-(2-hydroxyisobutyryl)lysine; alternate is present on Lys28. Lys28 carries the post-translational modification N6-acetyllysine; alternate. Lys28 is modified (N6-methyllysine; alternate). Lys28 carries the N6-lactoyllysine; alternate modification. The residue at position 28 (Lys28) is an N6-glutaryllysine; alternate. An ADP-ribosylserine; alternate modification is found at Ser29. At Ser29 the chain carries Phosphoserine; alternate; by AURKB, AURKC and RPS6KA5. Residue Lys37 is modified to N6,N6,N6-trimethyllysine; alternate. Lys37 carries the post-translational modification N6,N6-dimethyllysine; alternate. Lys37 carries the N6-(2-hydroxyisobutyryl)lysine; alternate modification. Residue Lys37 is modified to N6-acetyllysine; alternate. The residue at position 37 (Lys37) is an N6-methyllysine; alternate. Residue Lys38 is modified to N6-methyllysine. The residue at position 42 (Tyr42) is a Phosphotyrosine. An N6,N6,N6-trimethyllysine; alternate modification is found at Lys57. Lys57 is modified (N6-(2-hydroxyisobutyryl)lysine; alternate). Lys57 carries the post-translational modification N6-(beta-hydroxybutyryl)lysine; alternate. N6-acetyllysine; alternate is present on Lys57. N6-lactoyllysine; alternate is present on Lys57. Lys57 carries the post-translational modification N6-glutaryllysine; alternate. Position 57 is an N6-succinyllysine; alternate (Lys57). At Lys57 the chain carries N6-methyllysine; by EHMT2; alternate. Residue Ser58 is modified to Phosphoserine. Residues Lys65 and Lys80 each carry the N6-(2-hydroxyisobutyryl)lysine; alternate modification. Residues Lys65 and Lys80 each carry the N6-methyllysine; alternate modification. Lys80 is modified (N6,N6,N6-trimethyllysine; alternate). The residue at position 80 (Lys80) is an N6,N6-dimethyllysine; alternate. Lys80 carries the N6-acetyllysine; alternate modification. Lys80 is modified (N6-lactoyllysine; alternate). Lys80 bears the N6-glutaryllysine; alternate mark. Lys80 carries the post-translational modification N6-succinyllysine; alternate. A Phosphothreonine modification is found at Thr81. Residue Ser87 is modified to Phosphoserine. Thr108 carries the post-translational modification Phosphothreonine. N6-acetyllysine; alternate occurs at positions 116 and 123. An N6-glutaryllysine; alternate mark is found at Lys116 and Lys123. Lys123 is subject to N6-(2-hydroxyisobutyryl)lysine; alternate. Lys123 carries the post-translational modification N6-methyllysine; alternate. Lys123 is subject to N6-succinyllysine; alternate.

Belongs to the histone H3 family. In terms of assembly, the nucleosome is a histone octamer containing two molecules each of H2A, H2B, H3 and H4 assembled in one H3-H4 heterotetramer and two H2A-H2B heterodimers. The octamer wraps approximately 147 bp of DNA. Interacts with TONSL; CHAF1A and CHAF1B. Acetylation is generally linked to gene activation. Acetylation on Lys-10 (H3K9ac) impairs methylation at Arg-9 (H3R8me2s). Acetylation on Lys-19 (H3K18ac) and Lys-24 (H3K24ac) favors methylation at Arg-18 (H3R17me). Acetylation at Lys-123 (H3K122ac) by EP300/p300 plays a central role in chromatin structure: localizes at the surface of the histone octamer and stimulates transcription, possibly by promoting nucleosome instability. Post-translationally, citrullination at Arg-9 (H3R8ci) and/or Arg-18 (H3R17ci) by PADI4 impairs methylation and represses transcription. In terms of processing, asymmetric dimethylation at Arg-18 (H3R17me2a) by CARM1 is linked to gene activation. Symmetric dimethylation at Arg-9 (H3R8me2s) by PRMT5 is linked to gene repression. Asymmetric dimethylation at Arg-3 (H3R2me2a) by PRMT6 is linked to gene repression and is mutually exclusive with H3 Lys-5 methylation (H3K4me2 and H3K4me3). H3R2me2a is present at the 3' of genes regardless of their transcription state and is enriched on inactive promoters, while it is absent on active promoters. Methylation at Lys-5 (H3K4me), Lys-37 (H3K36me) and Lys-80 (H3K79me) are linked to gene activation. Methylation at Lys-5 (H3K4me) facilitates subsequent acetylation of H3 and H4. Methylation at Lys-80 (H3K79me) is associated with DNA double-strand break (DSB) responses and is a specific target for TP53BP1. Methylation at Lys-10 (H3K9me) and Lys-28 (H3K27me) are linked to gene repression. Methylation at Lys-10 (H3K9me) is a specific target for HP1 proteins (CBX1, CBX3 and CBX5) and prevents subsequent phosphorylation at Ser-11 (H3S10ph) and acetylation of H3 and H4. Methylation at Lys-5 (H3K4me) and Lys-80 (H3K79me) require preliminary monoubiquitination of H2B at 'Lys-120'. Methylation at Lys-10 (H3K9me) and Lys-28 (H3K27me) are enriched in inactive X chromosome chromatin. Monomethylation at Lys-57 (H3K56me1) by EHMT2/G9A in G1 phase promotes interaction with PCNA and is required for DNA replication. Post-translationally, phosphorylated at Thr-4 (H3T3ph) by HASPIN during prophase and dephosphorylated during anaphase. Phosphorylation at Ser-11 (H3S10ph) by AURKB is crucial for chromosome condensation and cell-cycle progression during mitosis and meiosis. In addition phosphorylation at Ser-11 (H3S10ph) by RPS6KA4 and RPS6KA5 is important during interphase because it enables the transcription of genes following external stimulation, like mitogens, stress, growth factors or UV irradiation and result in the activation of genes, such as c-fos and c-jun. Phosphorylation at Ser-11 (H3S10ph), which is linked to gene activation, prevents methylation at Lys-10 (H3K9me) but facilitates acetylation of H3 and H4. Phosphorylation at Ser-11 (H3S10ph) by AURKB mediates the dissociation of HP1 proteins (CBX1, CBX3 and CBX5) from heterochromatin. Phosphorylation at Ser-11 (H3S10ph) is also an essential regulatory mechanism for neoplastic cell transformation. Phosphorylated at Ser-29 (H3S28ph) by MAP3K20 isoform 1, RPS6KA5 or AURKB during mitosis or upon ultraviolet B irradiation. Phosphorylation at Thr-7 (H3T6ph) by PRKCB is a specific tag for epigenetic transcriptional activation that prevents demethylation of Lys-5 (H3K4me) by LSD1/KDM1A. At centromeres, specifically phosphorylated at Thr-12 (H3T11ph) from prophase to early anaphase, by DAPK3 and PKN1. Phosphorylation at Thr-12 (H3T11ph) by PKN1 or isoform M2 of PKM (PKM2) is a specific tag for epigenetic transcriptional activation that promotes demethylation of Lys-10 (H3K9me) by KDM4C/JMJD2C. Phosphorylation at Tyr-42 (H3Y41ph) by JAK2 promotes exclusion of CBX5 (HP1 alpha) from chromatin. In terms of processing, ubiquitinated. Lysine deamination at Lys-5 (H3K4all) to form allysine is mediated by LOXL2. Allysine formation by LOXL2 only takes place on H3K4me3 and results in gene repression. Post-translationally, butyrylation of histones marks active promoters and competes with histone acetylation. It is present during late spermatogenesis. In terms of processing, succinylation at Lys-80 (H3K79succ) by KAT2A takes place with a maximum frequency around the transcription start sites of genes. It gives a specific tag for epigenetic transcription activation. Desuccinylation at Lys-123 (H3K122succ) by SIRT7 in response to DNA damage promotes chromatin condensation and double-strand breaks (DSBs) repair. Serine ADP-ribosylation constitutes the primary form of ADP-ribosylation of proteins in response to DNA damage. Serine ADP-ribosylation at Ser-11 (H3S10ADPr) is mutually exclusive with phosphorylation at Ser-11 (H3S10ph) and impairs acetylation at Lys-10 (H3K9ac). As to expression, expressed in testicular cells.

Its subcellular location is the nucleus. The protein resides in the chromosome. Functionally, core component of nucleosome. Nucleosomes wrap and compact DNA into chromatin, limiting DNA accessibility to the cellular machineries which require DNA as a template. Histones thereby play a central role in transcription regulation, DNA repair, DNA replication and chromosomal stability. DNA accessibility is regulated via a complex set of post-translational modifications of histones, also called histone code, and nucleosome remodeling. The protein is Histone H3.1t of Homo sapiens (Human).